A 466-amino-acid polypeptide reads, in one-letter code: Ribulose bisphosphate carboxylase large chain (466 aa).

Position 5 is an N6,N6,N6-trimethyllysine (lysine 5). Substrate contacts are provided by asparagine 114 and threonine 164. Lysine 166 functions as the Proton acceptor in the catalytic mechanism. Lysine 168 contributes to the substrate binding site. Positions 192, 194, and 195 each coordinate Mg(2+). At lysine 192 the chain carries N6-carboxylysine. The Proton acceptor role is filled by histidine 285. 3 residues coordinate substrate: arginine 286, histidine 318, and serine 370.

This sequence belongs to the RuBisCO large chain family. Type I subfamily. In terms of assembly, heterohexadecamer of 8 large chains and 8 small chains. It depends on Mg(2+) as a cofactor.

It is found in the plastid. The protein resides in the chloroplast. The enzyme catalyses 2 (2R)-3-phosphoglycerate + 2 H(+) = D-ribulose 1,5-bisphosphate + CO2 + H2O. The catalysed reaction is D-ribulose 1,5-bisphosphate + O2 = 2-phosphoglycolate + (2R)-3-phosphoglycerate + 2 H(+). Its function is as follows. RuBisCO catalyzes two reactions: the carboxylation of D-ribulose 1,5-bisphosphate, the primary event in carbon dioxide fixation, as well as the oxidative fragmentation of the pentose substrate in the photorespiration process. Both reactions occur simultaneously and in competition at the same active site. In Lobelia sp, this protein is Ribulose bisphosphate carboxylase large chain.